Here is a 176-residue protein sequence, read N- to C-terminus: MDLPGPIHDFLLVFLGSGLILGGLGVVLLTNPIYSAFSLGLVLVCISLFYILSNSHFVAAAQLLIYVGAINVLILFAVMFMNGSEYYKDFNLWTIGNGLTSLVCTSILVSLITTILDTSWYGIIWTTRSNQIIEQDLISNSQQIGIHLATDFFLPFEFISIILLVALIGAIAVARQ.

Transmembrane regions (helical) follow at residues 10–30 (FLLVFLGSGLILGGLGVVLLT), 32–52 (PIYSAFSLGLVLVCISLFYIL), 61–81 (AQLLIYVGAINVLILFAVMFM), 92–112 (LWTIGNGLTSLVCTSILVSLI), and 152–172 (FFLPFEFISIILLVALIGAIA).

The protein belongs to the complex I subunit 6 family. As to quaternary structure, NDH is composed of at least 16 different subunits, 5 of which are encoded in the nucleus.

It localises to the plastid. It is found in the chloroplast thylakoid membrane. The catalysed reaction is a plastoquinone + NADH + (n+1) H(+)(in) = a plastoquinol + NAD(+) + n H(+)(out). It carries out the reaction a plastoquinone + NADPH + (n+1) H(+)(in) = a plastoquinol + NADP(+) + n H(+)(out). In terms of biological role, NDH shuttles electrons from NAD(P)H:plastoquinone, via FMN and iron-sulfur (Fe-S) centers, to quinones in the photosynthetic chain and possibly in a chloroplast respiratory chain. The immediate electron acceptor for the enzyme in this species is believed to be plastoquinone. Couples the redox reaction to proton translocation, and thus conserves the redox energy in a proton gradient. This Gossypium hirsutum (Upland cotton) protein is NAD(P)H-quinone oxidoreductase subunit 6, chloroplastic (ndhG).